We begin with the raw amino-acid sequence, 207 residues long: Tetrathionate reductase subunit B (207 aa).

Residues 1–28 (MLISKTLIFYQVVNIVSQKGSGKRRWKM) form the signal peptide. 4Fe-4S ferredoxin-type domains lie at 34–63 (YVYVVDVSKCYGCLSCVAACAAENNVPVGY), 75–106 (GRVAFVPKICNHCDNPSCVHACPVNATYKTEE), and 107–136 (GLVLIDDEICIGCGACIQACPYGARFRNPV). 16 residues coordinate [4Fe-4S] cluster: C43, C46, C49, C53, C84, C87, C92, C96, C116, C119, C122, C126, C143, C146, C157, and C161.

In terms of assembly, probably composed of three subunits: TtrA, TtrB and TtrC.

It localises to the cell membrane. Part of a membrane-bound tetrathionate reductase that catalyzes the reduction of tetrathionate to thiosulfate. TtrB is probably involved in transfer of electrons from TtrC to TtrA. This is Tetrathionate reductase subunit B (ttrB) from Archaeoglobus fulgidus (strain ATCC 49558 / DSM 4304 / JCM 9628 / NBRC 100126 / VC-16).